Reading from the N-terminus, the 427-residue chain is Zinc finger protein DPF3 (427 aa).

The tract at residues 182–244 (LENDENADEV…NDAASQDDHD (63 aa)) is disordered. The span at 184 to 199 (NDENADEVNEEEDLEE) shows a compositional bias: acidic residues. The span at 233–244 (RRNDAASQDDHD) shows a compositional bias: basic and acidic residues. The C2H2-type zinc-finger motif lies at 247–270 (YVCDICGKRYKNRPGLSYHYAHTH). Positions 272 to 301 (ASEEGDEAREQETRSSPVHRNENHKPQKGP) are disordered. The segment covering 279-296 (AREQETRSSPVHRNENHK) has biased composition (basic and acidic residues). 2 consecutive PHD-type zinc fingers follow at residues 308 to 368 (NNYC…CKSC) and 365 to 415 (CKSC…CREL).

It belongs to the requiem/DPF family. In terms of assembly, component of the BAF complex. Interacts with acetylated histones H3 and H4. Component of neuron-specific chromatin remodeling complex (nBAF complex), a subfamily of ATP-dependent SWI/SNF chromatin remodeling complexes. Expressed in the heart and somites.

It is found in the nucleus. Functionally, muscle-specific component of the BAF complex, a multiprotein complex involved in transcriptional activation and repression of select genes by chromatin remodeling (alteration of DNA-nucleosome topology). Specifically binds acetylated lysines on histone 3 and 4. In the complex, it acts as a tissue-specific anchor between histone acetylations and methylations and chromatin remodeling. It thereby probably plays an essential role in heart and skeletal muscle development. Belongs to the neuron-specific chromatin remodeling complex (nBAF complex) and plays a role in neural development. This chain is Zinc finger protein DPF3 (DPF3), found in Gallus gallus (Chicken).